Consider the following 114-residue polypeptide: Superoxide dismutase [Cu-Zn] (114 aa).

3 residues coordinate Cu cation: histidine 37, histidine 39, and histidine 54. A disordered region spans residues 48 to 76; that stretch reads CMSSGPHFNPRSKEHGAPTDENRHLGDLG. Residues histidine 54, histidine 62, histidine 71, and aspartate 74 each coordinate Zn(2+). Positions 58-73 are enriched in basic and acidic residues; the sequence is RSKEHGAPTDENRHLG. Residue histidine 111 coordinates Cu cation.

Belongs to the Cu-Zn superoxide dismutase family. Homodimer. Cu cation serves as cofactor. The cofactor is Zn(2+).

The protein resides in the cytoplasm. It carries out the reaction 2 superoxide + 2 H(+) = H2O2 + O2. Destroys radicals which are normally produced within the cells and which are toxic to biological systems. The sequence is that of Superoxide dismutase [Cu-Zn] from Drosophila obscura (Fruit fly).